Consider the following 60-residue polypeptide: Small ribosomal subunit protein bS21 (60 aa).

The tract at residues R35–R60 is disordered. Residues V43–R60 are compositionally biased toward basic residues.

It belongs to the bacterial ribosomal protein bS21 family.

The sequence is that of Small ribosomal subunit protein bS21 from Clostridium novyi (strain NT).